A 736-amino-acid chain; its full sequence is Phosphoribosylformylglycinamidine synthase subunit PurL (736 aa).

The active site involves His49. Tyr52 and Lys91 together coordinate ATP. A Mg(2+)-binding site is contributed by Glu93. Substrate-binding positions include Ser94 to His97 and Arg116. His95 serves as the catalytic Proton acceptor. Asp117 contributes to the Mg(2+) binding site. Gln240 serves as a coordination point for substrate. Asp268 serves as a coordination point for Mg(2+). Glu312–Gln314 provides a ligand contact to substrate. Residues Asp493 and Gly530 each coordinate ATP. Position 531 (Asn531) interacts with Mg(2+). Residue Ser533 coordinates substrate.

This sequence belongs to the FGAMS family. In terms of assembly, monomer. Part of the FGAM synthase complex composed of 1 PurL, 1 PurQ and 2 PurS subunits.

It is found in the cytoplasm. The enzyme catalyses N(2)-formyl-N(1)-(5-phospho-beta-D-ribosyl)glycinamide + L-glutamine + ATP + H2O = 2-formamido-N(1)-(5-O-phospho-beta-D-ribosyl)acetamidine + L-glutamate + ADP + phosphate + H(+). The protein operates within purine metabolism; IMP biosynthesis via de novo pathway; 5-amino-1-(5-phospho-D-ribosyl)imidazole from N(2)-formyl-N(1)-(5-phospho-D-ribosyl)glycinamide: step 1/2. Part of the phosphoribosylformylglycinamidine synthase complex involved in the purines biosynthetic pathway. Catalyzes the ATP-dependent conversion of formylglycinamide ribonucleotide (FGAR) and glutamine to yield formylglycinamidine ribonucleotide (FGAM) and glutamate. The FGAM synthase complex is composed of three subunits. PurQ produces an ammonia molecule by converting glutamine to glutamate. PurL transfers the ammonia molecule to FGAR to form FGAM in an ATP-dependent manner. PurS interacts with PurQ and PurL and is thought to assist in the transfer of the ammonia molecule from PurQ to PurL. This is Phosphoribosylformylglycinamidine synthase subunit PurL from Rhodopseudomonas palustris (strain BisB5).